A 67-amino-acid polypeptide reads, in one-letter code: DNA gyrase inhibitor YacG (67 aa).

Residues cysteine 10, cysteine 13, cysteine 29, and cysteine 33 each contribute to the Zn(2+) site.

This sequence belongs to the DNA gyrase inhibitor YacG family. Interacts with GyrB. It depends on Zn(2+) as a cofactor.

Inhibits all the catalytic activities of DNA gyrase by preventing its interaction with DNA. Acts by binding directly to the C-terminal domain of GyrB, which probably disrupts DNA binding by the gyrase. This is DNA gyrase inhibitor YacG from Pasteurella multocida (strain Pm70).